A 375-amino-acid polypeptide reads, in one-letter code: Carboxypeptidase O (375 aa).

The first 20 residues, 1-20, serve as a signal peptide directing secretion; the sequence is MKPLLGTFYLLGMLVPGWLG. In terms of domain architecture, Peptidase M14 spans 50–345; it reads RYHPMGEIYQ…EAVLSVLDDV (296 aa). The Zn(2+) site is built by His109 and Glu112. N-linked (GlcNAc...) asparagine glycosylation is present at Asn175. His237 is a Zn(2+) binding site. A glycan (N-linked (GlcNAc...) asparagine) is linked at Asn252. The active-site Proton donor/acceptor is Glu311. An N-linked (GlcNAc...) asparagine glycan is attached at Asn315. The GPI-anchor amidated serine moiety is linked to residue Ser354. Positions 355–375 are cleaved as a propeptide — removed in mature form; it reads ARKAKSTALVLGLLMSFMSLL.

The protein belongs to the peptidase M14 family. Zn(2+) serves as cofactor.

It localises to the apical cell membrane. Its function is as follows. Carboxypeptidase which preferentially cleaves C-terminal acidic residues from peptides and proteins. Can also cleave C-terminal hydrophobic amino acids, with a preference for small residues over large residues. The sequence is that of Carboxypeptidase O from Bos taurus (Bovine).